Here is a 340-residue protein sequence, read N- to C-terminus: Histidinol-phosphate aminotransferase (340 aa).

Lys-204 carries the N6-(pyridoxal phosphate)lysine modification.

The protein belongs to the class-II pyridoxal-phosphate-dependent aminotransferase family. Histidinol-phosphate aminotransferase subfamily. It depends on pyridoxal 5'-phosphate as a cofactor.

The catalysed reaction is L-histidinol phosphate + 2-oxoglutarate = 3-(imidazol-4-yl)-2-oxopropyl phosphate + L-glutamate. The protein operates within amino-acid biosynthesis; L-histidine biosynthesis; L-histidine from 5-phospho-alpha-D-ribose 1-diphosphate: step 7/9. This chain is Histidinol-phosphate aminotransferase, found in Thermococcus gammatolerans (strain DSM 15229 / JCM 11827 / EJ3).